A 510-amino-acid polypeptide reads, in one-letter code: MLISLSSSTLLTLFFIALSASWLSGLLFLHARMPLRFVHIHIGIAALPSLVSLLALVNNNGDRVVGPWHLDTLAWLMAFFVLTIGLIIQRFSVRYLMGDRSYRKYFALFTFTTGVSSVAWLSDDLRFMIMCWGATLIGLVLLIGLNKGWKVVSEATKISGYLFTISWIALLSAIIWLFQITGQWQLTSVVTNENVAQFGTLEKTGINLLIIVAVMIPAAQWPFQRWLIESAVAPTPVSAIMHAGLVNAGGIMLTRFSPLFHDDIAQIILLIFSSISVLIGTGISLVQVDYKRQLVGSTIAQMGFMLIQCALGAYLAAVIHLILHGLFKATLFLQAGSSVQRVEVVKQSNKKMSNLWMIVGRVLGLFIAIAFWFITSGEGYQLVSALILGWSLYFSWKQLVVFGEGRMGRIAGLIVLIGFSLIYFTVHNSLYKWLHTDMYQSVQPSAPAVIFVICILLFSSVICTFVTRNQSSTLSAVLYLWSVRVGEARRKSVESHPSYLKHDVSKGGNS.

A run of 14 helical transmembrane segments spans residues Thr9–Leu29, Phe37–Val57, Trp68–Ile88, Tyr105–Ser122, Leu125–Leu145, Ile158–Phe178, Thr204–Gln224, Trp226–Val246, Gln266–Val286, Gly303–Leu323, Leu355–Thr375, Leu382–Phe402, Ile410–Leu430, and Ala446–Val466.

Belongs to the inorganic carbon transporter (TC 9.A.2) DabB family. In terms of assembly, forms a complex with DabA.

It localises to the cell membrane. Its function is as follows. Part of an energy-coupled inorganic carbon pump. Expression of both dabA and dabB (DA2) restores growth in ambient air to E.coli deleted of its carbonic anhydrase genes (called CAfree, deletion of 'can' and 'cynT'). In Bacillus anthracis, this protein is Probable inorganic carbon transporter subunit DabB.